We begin with the raw amino-acid sequence, 294 residues long: MTHMFEGVGVALATPFTNNEVDFDALERHVQFLLDNNIQAIIVNGTTAESPTLTDEEKEKVLATVVKLVNHNVPVIAGTGTNNTYKSIQASIRAKEIGADAVMLITPYYNKTNQRGLIQHFETIANEVKLPVILYNVPSRTNMTIEPETVEILSHNPYIVALKDATNDFEYFDEVKQRINANEFALYSGNDDNVVKFYQRGGNGVISVIANVIPQEFQYLYDNRQNETDITNYFKPIEKLLEALSLDVNPIPIKVLTAYLGYGHYEVRLPLVPLEEAQCKQVERAFEQFKAGEQ.

Threonine 47 is a pyruvate binding site. Residue tyrosine 135 is the Proton donor/acceptor of the active site. Lysine 163 acts as the Schiff-base intermediate with substrate in catalysis. Isoleucine 206 contributes to the pyruvate binding site.

This sequence belongs to the DapA family. Homodimer.

The protein localises to the cytoplasm. The catalysed reaction is L-aspartate 4-semialdehyde + pyruvate = (2S,4S)-4-hydroxy-2,3,4,5-tetrahydrodipicolinate + H2O + H(+). Its pathway is amino-acid biosynthesis; L-lysine biosynthesis via DAP pathway; (S)-tetrahydrodipicolinate from L-aspartate: step 3/4. Functionally, catalyzes the condensation of (S)-aspartate-beta-semialdehyde [(S)-ASA] and pyruvate to 4-hydroxy-tetrahydrodipicolinate (HTPA). The protein is 4-hydroxy-tetrahydrodipicolinate synthase of Staphylococcus epidermidis (strain ATCC 35984 / DSM 28319 / BCRC 17069 / CCUG 31568 / BM 3577 / RP62A).